We begin with the raw amino-acid sequence, 180 residues long: uncharacterized protein (180 aa).

Positions 1–24 (MKKKTIFQCVILFFSILNIHVGMA) are cleaved as a signal peptide.

Its function is as follows. Part of the elfADCG-ycbUVF fimbrial operon, which promotes adhesion of bacteria to different abiotic surfaces. This is an uncharacterized protein from Escherichia coli (strain K12).